The sequence spans 446 residues: tRNA modification GTPase MnmE (446 aa).

Residues Arg21, Glu77, and Lys116 each contribute to the (6S)-5-formyl-5,6,7,8-tetrahydrofolate site. Residues 212–370 (GFRIALIGAP…LRAALASHVA (159 aa)) form the TrmE-type G domain. Asn222 is a K(+) binding site. GTP contacts are provided by residues 222 to 227 (NAGKST), 241 to 247 (TDVAGTT), and 266 to 269 (DTAG). Ser226 lines the Mg(2+) pocket. K(+) contacts are provided by Thr241, Val243, and Thr246. Thr247 lines the Mg(2+) pocket. Residue Lys446 coordinates (6S)-5-formyl-5,6,7,8-tetrahydrofolate.

This sequence belongs to the TRAFAC class TrmE-Era-EngA-EngB-Septin-like GTPase superfamily. TrmE GTPase family. Homodimer. Heterotetramer of two MnmE and two MnmG subunits. K(+) serves as cofactor.

The protein resides in the cytoplasm. Its function is as follows. Exhibits a very high intrinsic GTPase hydrolysis rate. Involved in the addition of a carboxymethylaminomethyl (cmnm) group at the wobble position (U34) of certain tRNAs, forming tRNA-cmnm(5)s(2)U34. In Caulobacter vibrioides (strain ATCC 19089 / CIP 103742 / CB 15) (Caulobacter crescentus), this protein is tRNA modification GTPase MnmE.